The sequence spans 918 residues: Calcium-transporting ATPase type 2C member 1 (918 aa).

The Cytoplasmic segment spans residues 1–75 (MKVARFQKIP…SEDEPLWKKY (75 aa)). Residues 76-96 (ISQFKNPLIMLLLASAVISVL) traverse the membrane as a helical segment. The Extracellular portion of the chain corresponds to 97 to 98 (MH). A helical membrane pass occupies residues 99–119 (QFDDAVSITVAILIVVTVAFV). The Cytoplasmic portion of the chain corresponds to 120–267 (QEYRSEKSLE…LQKSMDLLGK (148 aa)). Residues 268 to 288 (QLSFYSFGIIGIIMLVGWLLG) traverse the membrane as a helical segment. The Extracellular segment spans residues 289 to 302 (KDILEMFTISVSLA). A helical membrane pass occupies residues 303–323 (VAAIPEGLPIVVTVTLALGVM). Residues 324-703 (RMVKKRAIVK…IYNNIKNFVR (380 aa)) are Cytoplasmic-facing. D350 serves as the catalytic 4-aspartylphosphate intermediate. The Mg(2+) site is built by D643 and D647. A helical transmembrane segment spans residues 704–724 (FQLSTSIAALTLISLATLMNF). Residues 725–732 (PNPLNAMQ) are Extracellular-facing. The chain crosses the membrane as a helical span at residues 733 to 753 (ILWINIIMDGPPAQSLGVEPV). The Cytoplasmic segment spans residues 754–773 (DKDVIRKPPRNWKDSILTKN). A helical membrane pass occupies residues 774–794 (LILKILVSSIIIVCGTLFVFW). The Extracellular portion of the chain corresponds to 795-842 (RELRDNVITPRDTTMTFTCFVFFDMFNALSSRSQTKSVFEIGLCSNKM). Residues 843-863 (FCYAVLGSIMGQLLVIYFPPL) form a helical membrane-spanning segment. Topologically, residues 864-873 (QKVFQTESLS) are cytoplasmic. Residues 874–894 (ILDLLFLLGLTSSVCIVAEII) form a helical membrane-spanning segment. The Extracellular portion of the chain corresponds to 895 to 918 (KKVERSREKIQKHVSSTSSSFLEV).

This sequence belongs to the cation transport ATPase (P-type) (TC 3.A.3) family. Type IIA subfamily. Monomer. Homodimer.

The protein resides in the golgi apparatus. It is found in the trans-Golgi network membrane. Its subcellular location is the golgi stack membrane. It catalyses the reaction Ca(2+)(in) + ATP + H2O = Ca(2+)(out) + ADP + phosphate + H(+). The catalysed reaction is Mn(2+)(in) + ATP + H2O = Mn(2+)(out) + ADP + phosphate + H(+). Its function is as follows. ATP-driven pump that supplies the Golgi apparatus with Ca(2+) and Mn(2+) ions, both essential cofactors for processing and trafficking of newly synthesized proteins in the secretory pathway. Within a catalytic cycle, acquires Ca(2+) or Mn(2+) ions on the cytoplasmic side of the membrane and delivers them to the lumenal side. The transfer of ions across the membrane is coupled to ATP hydrolysis and is associated with a transient phosphorylation that shifts the pump conformation from inward-facing to outward-facing state. Plays a primary role in the maintenance of Ca(2+) homeostasis in the trans-Golgi compartment with a functional impact on Golgi and post-Golgi protein sorting as well as a structural impact on cisternae morphology. Responsible for loading the Golgi stores with Ca(2+) ions in keratinocytes, contributing to keratinocyte differentiation and epidermis integrity. Participates in Ca(2+) and Mn(2+) ions uptake into the Golgi store of hippocampal neurons and regulates protein trafficking required for neural polarity. May also play a role in the maintenance of Ca(2+) and Mn(2+) homeostasis and signaling in the cytosol while preventing cytotoxicity. The chain is Calcium-transporting ATPase type 2C member 1 (ATP2C1) from Pongo abelii (Sumatran orangutan).